We begin with the raw amino-acid sequence, 542 residues long: Glutamyl-tRNA(Gln) amidotransferase subunit B, mitochondrial (542 aa).

A mitochondrion-targeting transit peptide spans 1–66 (MRVFRRFYQV…PNSHTSFFDI (66 aa)).

The protein belongs to the GatB/GatE family. GatB subfamily. In terms of assembly, subunit of the heterotrimeric GatFAB amidotransferase (AdT) complex, composed of A, B and F subunits.

It localises to the mitochondrion. It carries out the reaction L-glutamyl-tRNA(Gln) + L-glutamine + ATP + H2O = L-glutaminyl-tRNA(Gln) + L-glutamate + ADP + phosphate + H(+). Allows the formation of correctly charged Gln-tRNA(Gln) through the transamidation of misacylated Glu-tRNA(Gln) in the mitochondria. The reaction takes place in the presence of glutamine and ATP through an activated gamma-phospho-Glu-tRNA(Gln). The protein is Glutamyl-tRNA(Gln) amidotransferase subunit B, mitochondrial of Zygosaccharomyces rouxii (strain ATCC 2623 / CBS 732 / NBRC 1130 / NCYC 568 / NRRL Y-229).